The chain runs to 252 residues: UPF0246 protein FP0718 (252 aa).

Belongs to the UPF0246 family.

In Flavobacterium psychrophilum (strain ATCC 49511 / DSM 21280 / CIP 103535 / JIP02/86), this protein is UPF0246 protein FP0718.